The primary structure comprises 356 residues: UDP-N-acetylglucosamine--N-acetylmuramyl-(pentapeptide) pyrophosphoryl-undecaprenol N-acetylglucosamine transferase (356 aa).

UDP-N-acetyl-alpha-D-glucosamine-binding residues include Ser198 and Gln289.

This sequence belongs to the glycosyltransferase 28 family. MurG subfamily.

It is found in the cell membrane. The catalysed reaction is Mur2Ac(oyl-L-Ala-gamma-D-Glu-L-Lys-D-Ala-D-Ala)-di-trans,octa-cis-undecaprenyl diphosphate + UDP-N-acetyl-alpha-D-glucosamine = beta-D-GlcNAc-(1-&gt;4)-Mur2Ac(oyl-L-Ala-gamma-D-Glu-L-Lys-D-Ala-D-Ala)-di-trans,octa-cis-undecaprenyl diphosphate + UDP + H(+). It participates in cell wall biogenesis; peptidoglycan biosynthesis. Cell wall formation. Catalyzes the transfer of a GlcNAc subunit on undecaprenyl-pyrophosphoryl-MurNAc-pentapeptide (lipid intermediate I) to form undecaprenyl-pyrophosphoryl-MurNAc-(pentapeptide)GlcNAc (lipid intermediate II). The protein is UDP-N-acetylglucosamine--N-acetylmuramyl-(pentapeptide) pyrophosphoryl-undecaprenol N-acetylglucosamine transferase of Streptococcus thermophilus (strain ATCC BAA-491 / LMD-9).